Reading from the N-terminus, the 294-residue chain is Acetyl-coenzyme A carboxylase carboxyl transferase subunit beta (294 aa).

In terms of domain architecture, CoA carboxyltransferase N-terminal spans 30-294; the sequence is IMTKCPECKK…PEVGGEADGE (265 aa). Cys-34, Cys-37, Cys-53, and Cys-56 together coordinate Zn(2+). Residues 34–56 form a C4-type zinc finger; the sequence is CPECKKIMYTKELQKNLMVCNYC.

This sequence belongs to the AccD/PCCB family. In terms of assembly, acetyl-CoA carboxylase is a heterohexamer composed of biotin carboxyl carrier protein (AccB), biotin carboxylase (AccC) and two subunits each of ACCase subunit alpha (AccA) and ACCase subunit beta (AccD). The cofactor is Zn(2+).

It localises to the cytoplasm. It catalyses the reaction N(6)-carboxybiotinyl-L-lysyl-[protein] + acetyl-CoA = N(6)-biotinyl-L-lysyl-[protein] + malonyl-CoA. It participates in lipid metabolism; malonyl-CoA biosynthesis; malonyl-CoA from acetyl-CoA: step 1/1. Functionally, component of the acetyl coenzyme A carboxylase (ACC) complex. Biotin carboxylase (BC) catalyzes the carboxylation of biotin on its carrier protein (BCCP) and then the CO(2) group is transferred by the transcarboxylase to acetyl-CoA to form malonyl-CoA. The polypeptide is Acetyl-coenzyme A carboxylase carboxyl transferase subunit beta (Listeria monocytogenes serotype 4a (strain HCC23)).